Consider the following 2116-residue polypeptide: MEKLLDEVLAPGGPYNLTVGSWVRDHVRSIVEGAWEVRDVVSAAQKRAIVAVIPRPVFTQMQVSDHPALHAISRYTRRHWIEWGPKEALHVLIDPSPGLLREVARVERRWVALCLHRTARKLATALAETASEAWHADYVCALRGAPSGPFYVHPEDVPHGGRAVADRCLLYYTPMQMCELMRTIDATLLVAVDLWPVALAAHVGDDWDDLGIAWHLDHDGGCPADCRGAGAGPTPGYTRPCTTRIYQVLPDTAHPGRLYRCGPRLWTRDCAVAELSWEVAQHCGHQARVRAVRCTLPIRHVRSLQPSARVRLPDLVHLAEVGRWRWFSLPRPVFQRMLSYCKTLSPDAYYSERVFKFKNALSHSITLAGNVLQEGWKGTCAEEDALCAYVAFRAWQSNARLAGIMKSAKRCAADSLSVAGWLDTIWDAIKRFFGSVPLAERMEEWEQDAAVAAFDRGPLEDGGRHLDTVQPPKSPPRPEIAATWIVHAASADRHCACAPRCDVPRERPSAPACPPDDEALIPPWLFAERRALRCREWDFEALRARADTAAAPAPLAPRPARYPTVLYRHPAHHGPWLTLDEPGEADAALVLCDPLGQPLRGPERHFAAGAHMCAQARGLQAFVRVVPPPERPWADGGARAWAKFFRGCAWAQRLLGEPAVMHLPYTDGDVPKLIALALRTLAQQGAALALSVRDLPGGAAFDANAVTAAVRAGPGQFAATSPPPGDPPPPRRARRSQRHSDARGTPPPAPARDPPPPAPSPPAPPRAGDPDSPTSAEPADRARHAELEVVYEPSGPPTSTKADPDSDIVESYARAAGPVHLRVRDIMDPPPGCKVVVNAANEGLLAGSGVCGAIFANATAALAADCRRLAPCPTGEAVATPGHGCGYTHIIHAVAPRRPRDPAALEEGEALLERAYRSIVALAAARRWACVACPLLGAGVYGWSAAESLRAALAATRTEPAERVSLHICHPDRATLTHASVLVGAGLAARRVSPPPTEPLASCPAGDLGRPAQRSASPPATPLGDATAPEPRGCQGCELCRCTRVTNDRAYVNLWLERDRGATSWAMRIPEVVVYGPEHLATHFPLNHYSVLKPAEVRPPRGMCGSDMWRCRGWQGMPQVRCTPSNAHAALCRTGVPPRVSTRGGELDPNTCWLRAAANVAQAARACGAYTSAGCPKCAYGRALSEARTHEDFAALSQRWSASHADASPDGTGDPLDPLMETVGCACSRVWVGTEHEAPPDHLLVSLHRAPNGPWGVVLEVRARPEGGNPTGHFVCAVGGGPRRVSDRPHLWLAVPLSRGGGTCAATDEGLAQAYYDDLEVRRLGDDAMARAALASVQRPRKGPYNIRVWNMAAGAGKTTRILAAFTREDLYVCPTNALLHEIQAKLRARDIDIKNAATYERALTKPLAAYRRIYIDEAFTLGGEYCAFVASQTTAEVICVGDRDQCGPHYANNCRTPVPDRWPTERSRHTWRFPDCWAARLRAGLDYDIEGERTGTFACNLWDGRQVDLHLAFSRETVRRLHEAGIRAYTVREAQGMSVGTACIHVGRDGTDVALALTRDLAIVSLTRASDALYLHELEDGSLRAAGLSAFLDAGALAELKEVPAGIDRVVAVEQAPPPLPPADGIPEAQDVPPFCPRTLEELVFGRAGHPHYADLNRVTEGEREVRYMRISRHLLNKNHTEMPGTERVLSAVCAVRRYRAGEDGSTLRTAVARQHPRPFRQIPPPRVTAGVAQEWRMTYLRERIDLTDVYTQMGVAARELTDRYARRYPEIFAGMCTAQSLSVPAFLKATLKCVDAALGPRDTEDCHAAQGKAGLEIRAWAKEWVQVMSPHFRAIQKIIMRALRPQFLVAAGHTEPEVDAWWQAHYTTNAIEVDFTEFDMNQTLATRDVELEISAALLGLPCAEDYRALRAGSYCTLRELGSTETGCERTSGEPATLLHNTTVAMCMAMRMVPKGVRWAGIFQGDDMVIFLPEGARSAALKWTPAEVGLFGFHIPVKHVSTPTPSFCGHVGTAAGLFHDVMHQAIKVLCRRFDPDVLEEQQVALLDRLRGVYAALPDTVAANAAYYDYSAERVLAIVRELTAYARGRGLDHPATIGALEEIQTPYARANLHDAD.

The segment at 36–49 is required for efficient proteolysis and P150-P90 interaction; the sequence is EVRDVVSAAQKRAI. The Alphavirus-like MT domain maps to 57 to 247; that stretch reads VFTQMQVSDH…TRPCTTRIYQ (191 aa). The disordered stretch occupies residues 715 to 781; sequence GQFAATSPPP…SPTSAEPADR (67 aa). Pro residues-rich tracts occupy residues 721–730 and 745–767; these read SPPPGDPPPP and TPPPAPARDPPPPAPSPPAPPRA. 3 short sequence motifs (pxxPxR; class II SH3-binding) span residues 727–732, 747–752, and 761–766; these read PPPPRR, PPAPAR, and PPAPPR. The 180-residue stretch at 806-985 folds into the Macro domain; sequence SDIVESYARA…LTHASVLVGA (180 aa). Residues 991–1030 form a disordered region; that stretch reads RVSPPPTEPLASCPAGDLGRPAQRSASPPATPLGDATAPE. The region spanning 1000–1301 is the Peptidase C27 domain; the sequence is LASCPAGDLG…WLAVPLSRGG (302 aa). Catalysis depends on C1152, which acts as the For cysteine protease activity. The tract at residues 1152 to 1183 is interaction with host CALM1; that stretch reads CWLRAAANVAQAARACGAYTSAGCPKCAYGRA. Residues C1175, C1178, C1227, and H1273 each coordinate Zn(2+). The segment at 1193-1228 is EF-hand-like; that stretch reads FAALSQRWSASHADASPDGTGDPLDPLMETVGCACS. The active-site For cysteine protease activity is the H1273. The 149-residue stretch at 1320–1468 folds into the (+)RNA virus helicase ATP-binding domain; that stretch reads EVRRLGDDAM…VPDRWPTERS (149 aa). 1352–1359 provides a ligand contact to a ribonucleoside 5'-triphosphate; the sequence is MAAGAGKT. In terms of domain architecture, (+)RNA virus helicase C-terminal spans 1469 to 1609; sequence RHTWRFPDCW…ELKEVPAGID (141 aa). Residues 1700–1900 form an involved in P150-P90 interaction region; that stretch reads YRAGEDGSTL…VELEISAALL (201 aa). Residues 1870–1981 form the RdRp catalytic domain; sequence TNAIEVDFTE…FLPEGARSAA (112 aa). The Human RB1 binding motif lies at 1902-1906; that stretch reads LPCAE.

Interacts with RNA-directed RNA polymerase p90. Interacts with host CALM1; this interaction is necessary for the protease activity and viral infectivity. Interacts with host C1QBP. Interacts with the capsid protein. As to quaternary structure, interacts with human RB1/retinoblastoma protein. Interacts with protease/methyltransferase p150. Zn(2+) serves as cofactor. In terms of processing, specific enzymatic cleavage by its own cysteine protease yield mature proteins p150 and p90.

It is found in the host membrane. Its subcellular location is the host cytoplasm. The protein localises to the host perinuclear region. The enzyme catalyses RNA(n) + a ribonucleoside 5'-triphosphate = RNA(n+1) + diphosphate. It carries out the reaction a ribonucleoside 5'-triphosphate + H2O = a ribonucleoside 5'-diphosphate + phosphate + H(+). It catalyses the reaction ATP + H2O = ADP + phosphate + H(+). Functionally, probable principal replicase for the negative-strand DNA, which replicates the 40S (+) genomic RNA into (-) antigenomic RNA. It cannot replicate the (-) into (+) until cleaved into p150 and p90 mature proteins. Its function is as follows. Protease that cleaves the precursor polyprotein into two mature products. Together with RNA-directed RNA polymerase p90, replicates the 40S genomic and antigenomic RNA by recognizing replications specific signals. The heterodimer P150/p90 is probably the principal replicase for positive-strand genomic RNA and the 24S subgenomic RNA, which codes for structural proteins. Responsible for the mRNA-capping of the viral mRNAs. This function is necessary since all viral RNAs are synthesized in the cytoplasm, and host capping enzymes are restricted to the nucleus. Forms fibers late in the infection that may be involved in cell-to-cell spread of the virus RNA in the absence of virus particle formation. In terms of biological role, together with protease/methyltransferase p150, replicates the 40S genomic and antigenomic RNA by recognizing replications specific signals. The heterodimer P150/p90 is probably the principal replicase for positive-strand genomic RNA and the 24S subgenomic RNA, which codes for structural proteins. A helicase activity is probably also present. The chain is Non-structural polyprotein p200 from Homo sapiens (Human).